A 252-amino-acid polypeptide reads, in one-letter code: Probable transcriptional regulatory protein THA_1246 (252 aa).

This sequence belongs to the TACO1 family.

Its subcellular location is the cytoplasm. This Thermosipho africanus (strain TCF52B) protein is Probable transcriptional regulatory protein THA_1246.